The sequence spans 93 residues: Small ribosomal subunit protein uS19 (93 aa).

It belongs to the universal ribosomal protein uS19 family.

Protein S19 forms a complex with S13 that binds strongly to the 16S ribosomal RNA. This is Small ribosomal subunit protein uS19 from Desulfitobacterium hafniense (strain DSM 10664 / DCB-2).